A 278-amino-acid chain; its full sequence is Orotidine 5'-phosphate decarboxylase (278 aa).

The Proton donor role is filled by K95.

This sequence belongs to the OMP decarboxylase family. Type 2 subfamily.

The catalysed reaction is orotidine 5'-phosphate + H(+) = UMP + CO2. It functions in the pathway pyrimidine metabolism; UMP biosynthesis via de novo pathway; UMP from orotate: step 2/2. The sequence is that of Orotidine 5'-phosphate decarboxylase from Methylibium petroleiphilum (strain ATCC BAA-1232 / LMG 22953 / PM1).